A 461-amino-acid chain; its full sequence is Siroheme synthase (461 aa).

The precorrin-2 dehydrogenase /sirohydrochlorin ferrochelatase stretch occupies residues 1–204 (MRYLPLFVYL…GNFRKANRVI (204 aa)). Residues 22–23 (IV) and 43–44 (KT) each bind NAD(+). The residue at position 128 (serine 128) is a Phosphoserine. The interval 218–461 (GSVSLVGAGP…HNEISWFGNG (244 aa)) is uroporphyrinogen-III C-methyltransferase. Proline 227 is an S-adenosyl-L-methionine binding site. Residue aspartate 250 is the Proton acceptor of the active site. Catalysis depends on lysine 272, which acts as the Proton donor. S-adenosyl-L-methionine-binding positions include 303–305 (GGD), isoleucine 308, methionine 386, and glycine 415.

It in the N-terminal section; belongs to the precorrin-2 dehydrogenase / sirohydrochlorin ferrochelatase family. In the C-terminal section; belongs to the precorrin methyltransferase family.

It carries out the reaction uroporphyrinogen III + 2 S-adenosyl-L-methionine = precorrin-2 + 2 S-adenosyl-L-homocysteine + H(+). The enzyme catalyses precorrin-2 + NAD(+) = sirohydrochlorin + NADH + 2 H(+). The catalysed reaction is siroheme + 2 H(+) = sirohydrochlorin + Fe(2+). Its pathway is cofactor biosynthesis; adenosylcobalamin biosynthesis; precorrin-2 from uroporphyrinogen III: step 1/1. It functions in the pathway cofactor biosynthesis; adenosylcobalamin biosynthesis; sirohydrochlorin from precorrin-2: step 1/1. The protein operates within porphyrin-containing compound metabolism; siroheme biosynthesis; precorrin-2 from uroporphyrinogen III: step 1/1. It participates in porphyrin-containing compound metabolism; siroheme biosynthesis; siroheme from sirohydrochlorin: step 1/1. Its pathway is porphyrin-containing compound metabolism; siroheme biosynthesis; sirohydrochlorin from precorrin-2: step 1/1. Functionally, multifunctional enzyme that catalyzes the SAM-dependent methylations of uroporphyrinogen III at position C-2 and C-7 to form precorrin-2 via precorrin-1. Then it catalyzes the NAD-dependent ring dehydrogenation of precorrin-2 to yield sirohydrochlorin. Finally, it catalyzes the ferrochelation of sirohydrochlorin to yield siroheme. This Blochmanniella floridana protein is Siroheme synthase.